We begin with the raw amino-acid sequence, 69 residues long: Probable molybdenum-pterin-binding protein (69 aa).

The region spanning 2 to 68 (KISARNQLKG…IKATSVMVGV (67 aa)) is the Mop domain.

To C.pasteurianum MOP proteins.

In terms of biological role, binds one mole of molybdenum per mole of protein and contains a pterin. In Haemophilus influenzae (strain ATCC 51907 / DSM 11121 / KW20 / Rd), this protein is Probable molybdenum-pterin-binding protein.